The primary structure comprises 194 residues: Interleukin-18 (194 aa).

Residues 1-36 (MAAMSEEGSCVNFKEMMFIDNTLYLIPEDNGDLESD) constitute a propeptide that is removed on maturation.

This sequence belongs to the IL-1 family. As to quaternary structure, forms a ternary complex with ligand-binding receptor subunit IL18R1 and signaling receptor subunit IL18RAP at the plasma membrane. Mature IL18 first binds to IL18R1 forming a low affinity binary complex, which then interacts with IL18RAP to form a high affinity ternary complex that signals inside the cell. Interacts with cargo receptor TMED10; the interaction mediates the translocation from the cytoplasm into the ERGIC (endoplasmic reticulum-Golgi intermediate compartment) and thereby secretion. In terms of processing, the pro-IL-18 precursor is processed by CASP1 to yield its mature, active form. The pro-IL-18 precursor is however not processed by Casp4/Casp11 in rodents. The pro-IL-18 precursor features autoinhibitory interactions between the propeptide and the post-cleavage-site region, preventing recognition by the IL18R1 receptor. Processing by CASP1 induces conformational changes to generate critical receptor-binding sites. The mature form is then secreted and released in the extracellular milieu by passing through the gasdermin-D (GSDMD) pore. In contrast, cleavage by CASP3 inactivates IL18.

It localises to the cytoplasm. It is found in the cytosol. The protein localises to the secreted. Functionally, pro-inflammatory cytokine primarily involved in epithelial barrier repair, polarized T-helper 1 (Th1) cell and natural killer (NK) cell immune responses. Upon binding to IL18R1 and IL18RAP, forms a signaling ternary complex which activates NF-kappa-B, triggering synthesis of inflammatory mediators. Synergizes with IL12/interleukin-12 to induce IFNG synthesis from T-helper 1 (Th1) cells and natural killer (NK) cells. Involved in transduction of inflammation downstream of pyroptosis: its mature form is specifically released in the extracellular milieu by passing through the gasdermin-D (GSDMD) pore. The chain is Interleukin-18 (Il18) from Rattus norvegicus (Rat).